The chain runs to 298 residues: UDP-N-acetylenolpyruvoylglucosamine reductase (298 aa).

One can recognise an FAD-binding PCMH-type domain in the interval 26–191 (KTGGEAEYLA…LSATFSLKPG (166 aa)). R170 is a catalytic residue. The active-site Proton donor is the S220. The active site involves E290.

Belongs to the MurB family. The cofactor is FAD.

It is found in the cytoplasm. It catalyses the reaction UDP-N-acetyl-alpha-D-muramate + NADP(+) = UDP-N-acetyl-3-O-(1-carboxyvinyl)-alpha-D-glucosamine + NADPH + H(+). It functions in the pathway cell wall biogenesis; peptidoglycan biosynthesis. Functionally, cell wall formation. The chain is UDP-N-acetylenolpyruvoylglucosamine reductase from Lactobacillus acidophilus (strain ATCC 700396 / NCK56 / N2 / NCFM).